A 1377-amino-acid chain; its full sequence is MDTSSVGGLELTDQTPVLLGSTAMATSLTNVGNSFSGPANPLVSRSNKFQNSSVEDDDDVVFIEPVQPPPPSVPVVADQRTITFTSSKNEELQGNDSKITPSSKELASQKGSVSETIVIDDEEDMETNQGQEKNSSNFIERRPPETKNRTNDVDFSTSSFSRSKVNAGMGNSGITTEPDSEIQIANVTTLETGVSSVNDGQLENTDGRDMNLMITHVTSLQNTNLGDVSNGLQSSNFGVNIQTYTPSLTSQTKTGVGPFNPGRMNVAGDVFQNGESATHHNPDSWISQSASFPRNQKQPGVDSLSPVASLPKQIFQPSAQQQPTKPVKVTCANCKKPLQKGQTAYQRKGSAHLFCSTTCLSSFSHKPAPKKLCVMCKKDITTMKGTIVAQVDSSESFQEFCSTSCLSLYEDKQNPTKGALNKSRCTICGKLTEIRHEVSFKNMTHKLCSDHCFNRYRMANGLIMNCCEQCGEYLPSKGAGNNVLVIDGQQKRFCCQSCVSEYKQVGSHPSFLKEVRDHMQDSFLMQPEKYGKLTTCTGCRTQCRFFDMTQCIGPNGYMEPYCSTACMNSHKTKYAKSQSLGIICHFCKRNSLPQYQTTMPDGKLYNFCNSSCVAKFQALSMQSSPNGQFVAPSDIQLKCNYCKNSFCSKPEILEWENKVHQFCSKTCSDDYKKLHCIVTYCEYCQEEKTLHETVNFSGVKRPFCSEGCKLLYKQDFARRLGLRCVTCNYCSQLCKKGATKELDGVVRDFCSEDCCKKFQDWYYKAARCDCCKSQGTLKERVQWRGEMKHFCDQHCLLRFYCQQNEPNMTTQKGPENLHYDQGCQTSRTKMTGSAPPPSPTPNKEMKNKAVLCKPLTMTKATYCKPHMQTKSCQTDDTWKTEYVPVPIPVPVYIPVPMHMYSQNIPVPTTVPVPVPVPVFLPAPLDSSEKIPAAIEELKSKVSSDALDTELLTMTDMMSEDEGKTETTNINSVIIETDIIGSDLLKNSDPETQSSMPDVPYEPDLDIEIDFPRAAEELDMENEFLLPPVFGEEYEEQPRPRSKKKGAKRKAVSGYQSHDDSSDNSECSFPFKYTYGVNAWKHWVKTRQLDEDLLVLDELKSSKSVKLKEDLLSHTTAELNYGLAHFVNEIRRPNGENYAPDSIYYLCLGIQEYLCGSNRKDNIFIDPGYQTFEQELNKILRSWQPSILPDGSIFSRVEEDYLWRIKQLGSHSPVALLNTLFYFNTKYFGLKTVEQHLRLSFGTVFRHWKKNPLTMENKACLRYQVSSLCGTDNEDKITTGKRKHEDDEPVFEQIENTANPSRCPVKMFECYLSKSPQNLNQRMDVFYLQPECSSSTDSPVWYTSTSLDRNTLENMLVRVLLVKDIYDKDNYELDEDTD.

Residues lysine 48, lysine 88, lysine 98, and lysine 104 each participate in a glycyl lysine isopeptide (Lys-Gly) (interchain with G-Cter in SUMO2) cross-link. Polar residues-rich tracts occupy residues 85 to 115 (TSSK…SVSE) and 127 to 138 (TNQGQEKNSSNF). The segment at 85 to 177 (TSSKNEELQG…GMGNSGITTE (93 aa)) is disordered. Residues 139 to 152 (IERRPPETKNRTND) are compositionally biased toward basic and acidic residues. Residue lysine 147 forms a Glycyl lysine isopeptide (Lys-Gly) (interchain with G-Cter in SUMO2) linkage. Residues 153–164 (VDFSTSSFSRSK) show a composition bias toward polar residues. Serine 159 carries the phosphoserine modification. Glycyl lysine isopeptide (Lys-Gly) (interchain with G-Cter in SUMO2) cross-links involve residues lysine 253 and lysine 297. The disordered stretch occupies residues 273 to 305 (NGESATHHNPDSWISQSASFPRNQKQPGVDSLS). The span at 284–298 (SWISQSASFPRNQKQ) shows a compositional bias: polar residues. Serine 305 is modified (phosphoserine). Residues lysine 312, lysine 325, lysine 348, and lysine 366 each participate in a glycyl lysine isopeptide (Lys-Gly) (interchain with G-Cter in SUMO2) cross-link. The MYM-type 1 zinc finger occupies 327-363 (VKVTCANCKKPLQKGQTAYQRKGSAHLFCSTTCLSSF). The MYM-type 2 zinc finger occupies 369-409 (PKKLCVMCKKDITTMKGTIVAQVDSSESFQEFCSTSCLSLY). Glycyl lysine isopeptide (Lys-Gly) (interchain with G-Cter in SUMO2) cross-links involve residues lysine 417, lysine 441, lysine 491, lysine 503, lysine 513, lysine 529, and lysine 532. MYM-type zinc fingers lie at residues 421 to 456 (NKSR…FNRY) and 463 to 502 (IMNC…VSEY). Residues 533-570 (LTTCTGCRTQCRFFDMTQCIGPNGYMEPYCSTACMNSH) form an MYM-type 5 zinc finger. Residues lysine 576, lysine 603, lysine 649, lysine 658, lysine 688, lysine 700, and lysine 709 each participate in a glycyl lysine isopeptide (Lys-Gly) (interchain with G-Cter in SUMO2) cross-link. The MYM-type 6 zinc-finger motif lies at 636–671 (QLKCNYCKNSFCSKPEILEWENKVHQFCSKTCSDDY). MYM-type zinc fingers lie at residues 723 to 758 (RCVT…CKKF) and 764 to 799 (KAAR…LLRF). Glycyl lysine isopeptide (Lys-Gly) (interchain with G-Cter in SUMO2) cross-links involve residues lysine 764, lysine 788, lysine 812, and lysine 829. Residues serine 838 and serine 958 each carry the phosphoserine modification. Disordered stretches follow at residues 983 to 1002 (LLKN…PYEP) and 1028 to 1064 (VFGE…SDNS). A compositionally biased stretch (basic residues) spans 1039–1050 (PRSKKKGAKRKA). Serine 1064 bears the Phosphoserine mark. The residue at position 1376 (threonine 1376) is a Phosphothreonine.

In terms of assembly, may be a component of a BHC histone deacetylase complex that contains HDAC1, HDAC2, HMG20B/BRAF35, KDM1A, RCOR1/CoREST, PHF21A/BHC80, ZNF198, ZNF217, ZMYM3, GSE1 and GTF2I.

It localises to the nucleus. Its function is as follows. May function as a transcription factor. This is Zinc finger MYM-type protein 2 (ZMYM2) from Pongo abelii (Sumatran orangutan).